A 151-amino-acid chain; its full sequence is SsrA-binding protein (151 aa).

The protein belongs to the SmpB family.

The protein localises to the cytoplasm. Functionally, required for rescue of stalled ribosomes mediated by trans-translation. Binds to transfer-messenger RNA (tmRNA), required for stable association of tmRNA with ribosomes. tmRNA and SmpB together mimic tRNA shape, replacing the anticodon stem-loop with SmpB. tmRNA is encoded by the ssrA gene; the 2 termini fold to resemble tRNA(Ala) and it encodes a 'tag peptide', a short internal open reading frame. During trans-translation Ala-aminoacylated tmRNA acts like a tRNA, entering the A-site of stalled ribosomes, displacing the stalled mRNA. The ribosome then switches to translate the ORF on the tmRNA; the nascent peptide is terminated with the 'tag peptide' encoded by the tmRNA and targeted for degradation. The ribosome is freed to recommence translation, which seems to be the essential function of trans-translation. The protein is SsrA-binding protein of Chlamydia pneumoniae (Chlamydophila pneumoniae).